Here is a 318-residue protein sequence, read N- to C-terminus: DNA-directed RNA polymerase subunit alpha 2 (318 aa).

The segment at 1 to 227 (MALENLLHPT…NQLRNIVDIE (227 aa)) is alpha N-terminal domain (alpha-NTD). The interval 242–318 (INPILLKHVE…TLIENWPQDL (77 aa)) is alpha C-terminal domain (alpha-CTD).

The protein belongs to the RNA polymerase alpha chain family. As to quaternary structure, homodimer. The RNAP catalytic core consists of 2 alpha, 1 beta, 1 beta' and 1 omega subunit. When a sigma factor is associated with the core the holoenzyme is formed, which can initiate transcription.

It carries out the reaction RNA(n) + a ribonucleoside 5'-triphosphate = RNA(n+1) + diphosphate. DNA-dependent RNA polymerase catalyzes the transcription of DNA into RNA using the four ribonucleoside triphosphates as substrates. The sequence is that of DNA-directed RNA polymerase subunit alpha 2 from Francisella tularensis subsp. novicida (strain U112).